The following is a 505-amino-acid chain: Maturase K (505 aa).

Belongs to the intron maturase 2 family. MatK subfamily.

The protein localises to the plastid. The protein resides in the chloroplast. Its function is as follows. Usually encoded in the trnK tRNA gene intron. Probably assists in splicing its own and other chloroplast group II introns. The polypeptide is Maturase K (Barclaya longifolia (Orchid lily)).